The primary structure comprises 63 residues: Cecropin-2 (63 aa).

Residues methionine 1 to alanine 23 form the signal peptide. The residue at position 62 (arginine 62) is an Arginine amide.

The protein belongs to the cecropin family.

The protein resides in the secreted. Its function is as follows. Cecropins have lytic and antibacterial activity against several Gram-positive and Gram-negative bacteria. The sequence is that of Cecropin-2 (Cec2A) from Drosophila virilis (Fruit fly).